We begin with the raw amino-acid sequence, 104 residues long: Integration host factor subunit beta (104 aa).

This sequence belongs to the bacterial histone-like protein family. Heterodimer of an alpha and a beta chain.

This protein is one of the two subunits of integration host factor, a specific DNA-binding protein that functions in genetic recombination as well as in transcriptional and translational control. The polypeptide is Integration host factor subunit beta (Chromobacterium violaceum (strain ATCC 12472 / DSM 30191 / JCM 1249 / CCUG 213 / NBRC 12614 / NCIMB 9131 / NCTC 9757 / MK)).